Here is a 206-residue protein sequence, read N- to C-terminus: Ras-related protein Rab-18 (206 aa).

The residue at position 1 (Met-1) is an N-acetylmethionine. The GTP site is built by Ser-17, Gly-20, Lys-21, Ser-22, Ser-23, Asp-34, Pro-35, Thr-40, Gly-66, Lys-123, and Asp-125. Ser-22 provides a ligand contact to Mg(2+). 2 consecutive short sequence motifs (switch) follow at residues 31 to 45 and 63 to 80; these read DTFDPELAATIGVDF and DTAGQERFRTLTPSYYRG. Mg(2+) is bound at residue Thr-40. Position 144 is a phosphoserine (Ser-144). Residue Ala-152 coordinates GTP. The S-palmitoyl cysteine moiety is linked to residue Cys-199. Cys-203 bears the Cysteine methyl ester mark. Cys-203 is lipidated: S-geranylgeranyl cysteine. A propeptide spans 204 to 206 (removed in mature form); sequence SVL.

It belongs to the small GTPase superfamily. Rab family. As to quaternary structure, interacts (in GTP-bound form) with ZFYVE1. Interacts with ZW10 and this interaction is enhanced in the presence of ZFYVE1. Interacts with BSCL2. Mg(2+) is required as a cofactor.

It is found in the endoplasmic reticulum membrane. Its subcellular location is the golgi apparatus. The protein localises to the cis-Golgi network membrane. It localises to the lipid droplet. The protein resides in the apical cell membrane. The catalysed reaction is GTP + H2O = GDP + phosphate + H(+). Its activity is regulated as follows. Regulated by guanine nucleotide exchange factors (GEFs) which promote the exchange of bound GDP for free GTP. Regulated by GTPase activating proteins (GAPs) which increase the GTP hydrolysis activity at the ER membrane. Inhibited by GDP dissociation inhibitors (GDIs) which prevent Rab-GDP dissociation. The small GTPases Rab are key regulators of intracellular membrane trafficking, from the formation of transport vesicles to their fusion with membranes. Rabs cycle between an inactive GDP-bound form and an active GTP-bound form that is able to recruit to membranes different sets of downstream effectors directly responsible for vesicle formation, movement, tethering and fusion. RAB18 is required for the localization of ZFYVE1 to lipid droplets and for its function in mediating the formation of endoplasmic reticulum-lipid droplets (ER-LD) contacts. Also required for maintaining endoplasmic reticulum structure. Plays a role in apical endocytosis/recycling. Plays a key role in eye and brain development and neurodegeneration. In Rattus norvegicus (Rat), this protein is Ras-related protein Rab-18.